Reading from the N-terminus, the 413-residue chain is 3-isopropylmalate dehydratase large subunit (413 aa).

Residues Cys293, Cys353, and Cys356 each contribute to the [4Fe-4S] cluster site.

It belongs to the aconitase/IPM isomerase family. LeuC type 2 subfamily. In terms of assembly, heterodimer of LeuC and LeuD. The cofactor is [4Fe-4S] cluster.

The catalysed reaction is (2R,3S)-3-isopropylmalate = (2S)-2-isopropylmalate. It participates in amino-acid biosynthesis; L-leucine biosynthesis; L-leucine from 3-methyl-2-oxobutanoate: step 2/4. Catalyzes the isomerization between 2-isopropylmalate and 3-isopropylmalate, via the formation of 2-isopropylmaleate. The chain is 3-isopropylmalate dehydratase large subunit from Picrophilus torridus (strain ATCC 700027 / DSM 9790 / JCM 10055 / NBRC 100828 / KAW 2/3).